The sequence spans 633 residues: Laccase ARB_05828 (633 aa).

The first 16 residues, 1 to 16 (MKRLGLAALYIGSALA), serve as a signal peptide directing secretion. Positions 22 to 47 (GPPSRNVPRDDFPMFNPLPSTDLNTR) are excised as a propeptide. The N-linked (GlcNAc...) asparagine glycan is linked to Asn-143. Cu cation is bound by residues His-148, His-150, His-192, and His-194. Cys-169 and Cys-607 are oxidised to a cystine. The Plastocyanin-like domain occupies 224–353 (LLMTDHLHSS…GRYWVRTTPA (130 aa)). Asn-286 and Asn-456 each carry an N-linked (GlcNAc...) asparagine glycan. Cu cation-binding residues include His-508, His-511, His-513, His-568, Cys-569, His-570, and His-574.

The protein belongs to the multicopper oxidase family. In terms of assembly, monomer. Cu cation serves as cofactor.

The protein localises to the secreted. It carries out the reaction 4 hydroquinone + O2 = 4 benzosemiquinone + 2 H2O. The polypeptide is Laccase ARB_05828 (Arthroderma benhamiae (strain ATCC MYA-4681 / CBS 112371) (Trichophyton mentagrophytes)).